The following is a 98-amino-acid chain: NADH-ubiquinone oxidoreductase chain 4L (98 aa).

3 helical membrane-spanning segments follow: residues 1–21, 29–49, and 61–81; these read MSMVYFNIFLAFIVSLVGLLM, SLLCLEGMMLSLFVMMSVTIL, and IILLVFAACEAALGLSLLVMV.

The protein belongs to the complex I subunit 4L family. As to quaternary structure, core subunit of respiratory chain NADH dehydrogenase (Complex I) which is composed of 45 different subunits.

It is found in the mitochondrion inner membrane. The enzyme catalyses a ubiquinone + NADH + 5 H(+)(in) = a ubiquinol + NAD(+) + 4 H(+)(out). In terms of biological role, core subunit of the mitochondrial membrane respiratory chain NADH dehydrogenase (Complex I) which catalyzes electron transfer from NADH through the respiratory chain, using ubiquinone as an electron acceptor. Part of the enzyme membrane arm which is embedded in the lipid bilayer and involved in proton translocation. The polypeptide is NADH-ubiquinone oxidoreductase chain 4L (MT-ND4L) (Callorhinus ursinus (Northern fur seal)).